A 97-amino-acid polypeptide reads, in one-letter code: Small ribosomal subunit protein uS19 (97 aa).

Residues 74–97 (FSPTRRFGGHPDKKAVKGKIEKQG) are disordered. Residues 82 to 97 (GHPDKKAVKGKIEKQG) show a composition bias toward basic and acidic residues.

Belongs to the universal ribosomal protein uS19 family.

Its function is as follows. Protein S19 forms a complex with S13 that binds strongly to the 16S ribosomal RNA. In Petrotoga mobilis (strain DSM 10674 / SJ95), this protein is Small ribosomal subunit protein uS19.